A 206-amino-acid polypeptide reads, in one-letter code: Large ribosomal subunit protein uL4 (206 aa).

Residues 47–75 form a disordered region; sequence GTQSAKTRAEVSGGGIKPWRQKGTGRARQ.

It belongs to the universal ribosomal protein uL4 family. As to quaternary structure, part of the 50S ribosomal subunit.

Functionally, one of the primary rRNA binding proteins, this protein initially binds near the 5'-end of the 23S rRNA. It is important during the early stages of 50S assembly. It makes multiple contacts with different domains of the 23S rRNA in the assembled 50S subunit and ribosome. In terms of biological role, forms part of the polypeptide exit tunnel. This is Large ribosomal subunit protein uL4 from Clostridium botulinum (strain 657 / Type Ba4).